A 172-amino-acid polypeptide reads, in one-letter code: Crossover junction endodeoxyribonuclease RuvC (172 aa).

Residues aspartate 12, glutamate 71, and aspartate 143 contribute to the active site. 3 residues coordinate Mg(2+): aspartate 12, glutamate 71, and aspartate 143.

It belongs to the RuvC family. In terms of assembly, homodimer which binds Holliday junction (HJ) DNA. The HJ becomes 2-fold symmetrical on binding to RuvC with unstacked arms; it has a different conformation from HJ DNA in complex with RuvA. In the full resolvosome a probable DNA-RuvA(4)-RuvB(12)-RuvC(2) complex forms which resolves the HJ. Mg(2+) serves as cofactor.

The protein resides in the cytoplasm. It carries out the reaction Endonucleolytic cleavage at a junction such as a reciprocal single-stranded crossover between two homologous DNA duplexes (Holliday junction).. In terms of biological role, the RuvA-RuvB-RuvC complex processes Holliday junction (HJ) DNA during genetic recombination and DNA repair. Endonuclease that resolves HJ intermediates. Cleaves cruciform DNA by making single-stranded nicks across the HJ at symmetrical positions within the homologous arms, yielding a 5'-phosphate and a 3'-hydroxyl group; requires a central core of homology in the junction. The consensus cleavage sequence is 5'-(A/T)TT(C/G)-3'. Cleavage occurs on the 3'-side of the TT dinucleotide at the point of strand exchange. HJ branch migration catalyzed by RuvA-RuvB allows RuvC to scan DNA until it finds its consensus sequence, where it cleaves and resolves the cruciform DNA. This is Crossover junction endodeoxyribonuclease RuvC from Coxiella burnetii (strain CbuK_Q154) (Coxiella burnetii (strain Q154)).